Reading from the N-terminus, the 100-residue chain is Replication restart protein PriB (100 aa).

The 96-residue stretch at 4–99 (TNLVSLAALI…LRIQNIKEYK (96 aa)) folds into the SSB domain.

This sequence belongs to the PriB family. As to quaternary structure, homodimer. Component of the replication restart primosome. Primosome assembly occurs via a 'hand-off' mechanism. PriA binds to replication forks, subsequently PriB then DnaT bind; DnaT then displaces ssDNA to generate the helicase loading substrate. Interacts with PriA with high affinity, independent of DNA presence.

PriA:PriB complex-catalyzed duplex DNA winding is inhibited by CGS 15943 (CHEBI:131351); PriA is the drug target. Stimulates the DNA unwinding activity of PriA helicase, which does not seem to require single-stranded (ss)DNA-binding by PriB. Activates DNA-dependent ATP hydrolysis catalyzed by PriA. Weakly binds ssDNA. Weakly binds double-stranded (ds)DNA, a partial duplex DNA with a 3' ssDNA overhang, and a forked DNA structure with fully duplex leading and lagging strand arms in vitro. Its function is as follows. Involved in the restart of stalled replication forks, which reloads the replicative helicase on sites other than the origin of replication; the PriA-PriB pathway is the major replication restart pathway. During primosome assembly it facilitates complex formation between PriA and DnaT on DNA; stabilizes PriA on DNA. Stimulates the DNA unwinding activity of PriA helicase. This Neisseria gonorrhoeae (strain ATCC 700825 / FA 1090) protein is Replication restart protein PriB.